The following is a 365-amino-acid chain: Alanine racemase (365 aa).

Residue lysine 32 is the Proton acceptor; specific for D-alanine of the active site. N6-(pyridoxal phosphate)lysine is present on lysine 32. Position 128 (arginine 128) interacts with substrate. Tyrosine 257 functions as the Proton acceptor; specific for L-alanine in the catalytic mechanism. Residue methionine 305 coordinates substrate.

It belongs to the alanine racemase family. Requires pyridoxal 5'-phosphate as cofactor.

It catalyses the reaction L-alanine = D-alanine. The protein operates within amino-acid biosynthesis; D-alanine biosynthesis; D-alanine from L-alanine: step 1/1. Functionally, catalyzes the interconversion of L-alanine and D-alanine. May also act on other amino acids. The protein is Alanine racemase (alr) of Francisella tularensis subsp. tularensis (strain WY96-3418).